Consider the following 314-residue polypeptide: Porphobilinogen deaminase (314 aa).

Cys-243 is modified (S-(dipyrrolylmethanemethyl)cysteine).

Belongs to the HMBS family. Monomer. Dipyrromethane serves as cofactor.

It carries out the reaction 4 porphobilinogen + H2O = hydroxymethylbilane + 4 NH4(+). Its pathway is porphyrin-containing compound metabolism; protoporphyrin-IX biosynthesis; coproporphyrinogen-III from 5-aminolevulinate: step 2/4. In terms of biological role, tetrapolymerization of the monopyrrole PBG into the hydroxymethylbilane pre-uroporphyrinogen in several discrete steps. This Bordetella bronchiseptica (strain ATCC BAA-588 / NCTC 13252 / RB50) (Alcaligenes bronchisepticus) protein is Porphobilinogen deaminase.